Reading from the N-terminus, the 430-residue chain is Enolase (430 aa).

Gln-165 provides a ligand contact to (2R)-2-phosphoglycerate. Catalysis depends on Glu-207, which acts as the Proton donor. The Mg(2+) site is built by Asp-244, Glu-287, and Asp-314. (2R)-2-phosphoglycerate is bound by residues Lys-339, Arg-368, Ser-369, and Lys-390. Lys-339 serves as the catalytic Proton acceptor.

The protein belongs to the enolase family. Component of the RNA degradosome, a multiprotein complex involved in RNA processing and mRNA degradation. Requires Mg(2+) as cofactor.

The protein localises to the cytoplasm. Its subcellular location is the secreted. The protein resides in the cell surface. The enzyme catalyses (2R)-2-phosphoglycerate = phosphoenolpyruvate + H2O. Its pathway is carbohydrate degradation; glycolysis; pyruvate from D-glyceraldehyde 3-phosphate: step 4/5. Its function is as follows. Catalyzes the reversible conversion of 2-phosphoglycerate (2-PG) into phosphoenolpyruvate (PEP). It is essential for the degradation of carbohydrates via glycolysis. The sequence is that of Enolase from Stenotrophomonas maltophilia (strain R551-3).